Consider the following 907-residue polypeptide: Polyphosphoinositide phosphatase (907 aa).

The SAC domain occupies 154–547 (FQNVDLSSNF…GDTLSLQYGG (394 aa)). A disordered region spans residues 707–788 (GIDPSPFTVR…VKMTDAGDSA (82 aa)). A compositionally biased stretch (acidic residues) spans 758-770 (SEDDSGTDREEEG).

Component of the PI(3,5)P2 regulatory complex/PAS complex, at least composed of PIKFYVE, FIG4 and VAC14. VAC14 nucleates the assembly of the complex and serves as a scaffold by pentamerizing into a star-shaped structure, which can bind a single copy each of PIKFYVE and FIG4 and coordinates their activities.

The protein localises to the endosome membrane. The enzyme catalyses a 1,2-diacyl-sn-glycero-3-phospho-(1D-myo-inositol-3,5-bisphosphate) + H2O = a 1,2-diacyl-sn-glycero-3-phospho-(1D-myo-inositol-3-phosphate) + phosphate. The catalysed reaction is a 1,2-diacyl-sn-glycero-3-phospho-(1D-myo-inositol-4,5-bisphosphate) + H2O = a 1,2-diacyl-sn-glycero-3-phospho-(1D-myo-inositol 4-phosphate) + phosphate. It catalyses the reaction a 1,2-diacyl-sn-glycero-3-phospho-(1D-myo-inositol-3,4,5-trisphosphate) + H2O = a 1,2-diacyl-sn-glycero-3-phospho-(1D-myo-inositol-3,4-bisphosphate) + phosphate. It carries out the reaction O-phospho-L-seryl-[protein] + H2O = L-seryl-[protein] + phosphate. In terms of biological role, dual specificity phosphatase component of the PI(3,5)P2 regulatory complex which regulates both the synthesis and turnover of phosphatidylinositol 3,5-bisphosphate (PtdIns(3,5)P2). Catalyzes the dephosphorylation of phosphatidylinositol 3,5-bisphosphate (PtdIns(3,5)P2) to form phosphatidylinositol 3-phosphate. Has serine-protein phosphatase activity acting on PIKfyve to stimulate its lipid kinase activity, its catalytically activity being required for maximal PI(3,5)P2 production. In vitro, hydrolyzes all three D5-phosphorylated polyphosphoinositide and although displaying preferences for PtdIns(3,5)P2, it is capable of hydrolyzing PtdIns(3,4,5)P3 and PtdIns(4,5)P2, at least in vitro. The chain is Polyphosphoinositide phosphatase from Homo sapiens (Human).